A 495-amino-acid polypeptide reads, in one-letter code: GTPase Der (495 aa).

The EngA-type G 1 domain maps to 3 to 178 (AKIALVGRPN…EMRDLLPEED (176 aa)). Residues 9–16 (GRPNVGKS), 57–61 (DTGGI), and 130–133 (NKVD) contribute to the GTP site. Residues 190–227 (TAVASADADVDADVETEGGTSASETEEGITEETVEDEP) form a disordered region. The span at 213-227 (ETEEGITEETVEDEP) shows a compositional bias: acidic residues. One can recognise an EngA-type G 2 domain in the interval 231–404 (LRLCMLGRPN…LAARIRRECS (174 aa)). GTP-binding positions include 237 to 244 (GRPNAGKS), 284 to 288 (DTAGV), and 349 to 352 (NKMD). In terms of domain architecture, KH-like spans 405–489 (VRIPTGQLNR…PMRVHFRSSH (85 aa)).

The protein belongs to the TRAFAC class TrmE-Era-EngA-EngB-Septin-like GTPase superfamily. EngA (Der) GTPase family. In terms of assembly, associates with the 50S ribosomal subunit.

Functionally, GTPase that plays an essential role in the late steps of ribosome biogenesis. The protein is GTPase Der of Nitratidesulfovibrio vulgaris (strain DP4) (Desulfovibrio vulgaris).